A 192-amino-acid chain; its full sequence is Crossover junction endodeoxyribonuclease RuvC (192 aa).

Residues D9, E70, and D143 contribute to the active site. 3 residues coordinate Mg(2+): D9, E70, and D143. Positions 161 to 192 (GASVATTGPGSSSLTPAQRAWAEAEAKARRAR) are disordered. The segment covering 163 to 176 (SVATTGPGSSSLTP) has biased composition (polar residues). A compositionally biased stretch (basic and acidic residues) spans 182–192 (AEAEAKARRAR).

The protein belongs to the RuvC family. Homodimer which binds Holliday junction (HJ) DNA. The HJ becomes 2-fold symmetrical on binding to RuvC with unstacked arms; it has a different conformation from HJ DNA in complex with RuvA. In the full resolvosome a probable DNA-RuvA(4)-RuvB(12)-RuvC(2) complex forms which resolves the HJ. Mg(2+) is required as a cofactor.

It is found in the cytoplasm. The enzyme catalyses Endonucleolytic cleavage at a junction such as a reciprocal single-stranded crossover between two homologous DNA duplexes (Holliday junction).. Functionally, the RuvA-RuvB-RuvC complex processes Holliday junction (HJ) DNA during genetic recombination and DNA repair. Endonuclease that resolves HJ intermediates. Cleaves cruciform DNA by making single-stranded nicks across the HJ at symmetrical positions within the homologous arms, yielding a 5'-phosphate and a 3'-hydroxyl group; requires a central core of homology in the junction. The consensus cleavage sequence is 5'-(A/T)TT(C/G)-3'. Cleavage occurs on the 3'-side of the TT dinucleotide at the point of strand exchange. HJ branch migration catalyzed by RuvA-RuvB allows RuvC to scan DNA until it finds its consensus sequence, where it cleaves and resolves the cruciform DNA. This chain is Crossover junction endodeoxyribonuclease RuvC, found in Pseudarthrobacter chlorophenolicus (strain ATCC 700700 / DSM 12829 / CIP 107037 / JCM 12360 / KCTC 9906 / NCIMB 13794 / A6) (Arthrobacter chlorophenolicus).